A 387-amino-acid chain; its full sequence is Methyltransferase phomM (387 aa).

Positions 98-223 (PHRPKDLHIL…QSVADLFTTL (126 aa)) are methyltransferase domain.

It belongs to the class I-like SAM-binding methyltransferase superfamily. Erg6/SMT family.

It functions in the pathway mycotoxin biosynthesis. Its function is as follows. Methyltransferase; part of the gene cluster that mediates the biosynthesis of the phomopsins, a group of hexapeptide mycotoxins which infects lupins and causes lupinosis disease in livestock. Within the pathway, phomM acts as an S-adenosylmethionine-dependent alpha-N-methyltransferase that catalyzes two successive N-methylation reactions, converting N-desmethyl-phomopsin A to phomopsin A and phomopsin A further to an N,N-dimethylated congener called phomopsin E. The pathway starts with the processing of the precursor phomA by several endopeptidases including kexin proteases as well as the cluster-specific S41 family peptidase phomP1 and the oligopeptidase phomG to produce 10 identical copies of the hexapeptide Tyr-Val-Ile-Pro-Ile-Asp. After being excised from the precursor peptide, the core peptides are cyclized and modified post-translationally by enzymes encoded within the gene cluster. The timing and order of proteolysis of the phomA precursor and PTMs are still unknown. Two tyrosinase-like enzymes, phomQ1 and phomQ2, catalyze the chlorination and hydroxylation of Tyr, respectively. PhomYb, is proposed to be involved in the construction of the macrocyclic structure. The other 4 ustYa family proteins may be involved in PTMs that generate the unique structure of phomopsin A. PhomYa is required for the hydroxylation of C-beta of Tyr. PhomYc, phomYd, and phomYe are responsible for the biosynthesis of 2,3-dehydroisoleucine (dIle), 2,3-dehydroaspartic acid (dAsp), and 3,4-dehydroproline (dPro), respectively. While dIle formation by phomYc is indispensable for the installation of dAsp by phomYd, the order of the other PTMs have not been elucidated yet. Most of the biosynthetic enzymes likely have broad substrate specificity, and thus, there might be a metabolic grid from a precursor to phomopsin A. The enzyme(s) responsible for the biosynthesis of 3,4-dehydrovaline (dVal) have also not been identified yet. Finally, phomM acts as an S-adenosylmethionine-dependent alpha-N-methyltransferase that catalyzes two successive N-methylation reactions, converting N-desmethyl-phomopsin A to phomopsin A and phomopsin A further to an N,N-dimethylated congener called phomopsin E. The protein is Methyltransferase phomM of Diaporthe leptostromiformis (Lupinosis disease fungus).